Consider the following 367-residue polypeptide: Flagellar P-ring protein (367 aa).

An N-terminal signal peptide occupies residues 1 to 18 (MFRALITALFCFSGLALA).

It belongs to the FlgI family. In terms of assembly, the basal body constitutes a major portion of the flagellar organelle and consists of four rings (L,P,S, and M) mounted on a central rod.

The protein localises to the periplasm. The protein resides in the bacterial flagellum basal body. In terms of biological role, assembles around the rod to form the L-ring and probably protects the motor/basal body from shearing forces during rotation. This is Flagellar P-ring protein from Rhizorhabdus wittichii (strain DSM 6014 / CCUG 31198 / JCM 15750 / NBRC 105917 / EY 4224 / RW1) (Sphingomonas wittichii).